Consider the following 692-residue polypeptide: Elongation factor G (692 aa).

The region spanning 8-282 (AKTRNIGIMA…AVIAYLPSPL (275 aa)) is the tr-type G domain. Residues 17 to 24 (AHVDAGKT), 81 to 85 (DTPGH), and 135 to 138 (NKMD) contribute to the GTP site.

This sequence belongs to the TRAFAC class translation factor GTPase superfamily. Classic translation factor GTPase family. EF-G/EF-2 subfamily.

The protein resides in the cytoplasm. Functionally, catalyzes the GTP-dependent ribosomal translocation step during translation elongation. During this step, the ribosome changes from the pre-translocational (PRE) to the post-translocational (POST) state as the newly formed A-site-bound peptidyl-tRNA and P-site-bound deacylated tRNA move to the P and E sites, respectively. Catalyzes the coordinated movement of the two tRNA molecules, the mRNA and conformational changes in the ribosome. The polypeptide is Elongation factor G (Streptococcus equi subsp. zooepidemicus (strain MGCS10565)).